A 296-amino-acid polypeptide reads, in one-letter code: Remorin 4.1 (296 aa).

Disordered regions lie at residues 1 to 78, 121 to 142, and 242 to 266; these read MLTL…SGEN, TRIGENDDVGDHGQVPEEDSNP, and EKTQNKVAKAQRKAEERRATAEGKR. A compositionally biased stretch (basic and acidic residues) spans 21–39; the sequence is ASDRRDETPSSEIVVRDIH. 2 stretches are compositionally biased toward polar residues: residues 41–53 and 62–78; these read MTTTTELTRPQQR and PSRSIAFSDGTTSSGEN. Basic and acidic residues-rich tracts occupy residues 121-135 and 253-266; these read TRIGENDDVGDHGQV and RKAEERRATAEGKR. Residues 226–261 are a coiled coil; that stretch reads MKKIERKLEDRRAKAMEKTQNKVAKAQRKAEERRAT.

It belongs to the remorin family. Forms homodimer and heterodimer with REM4.2. Interacts with KIN11. In terms of processing, phosphorylated by KIN11. Probably ubiquitinated and degraded by the 26S proteasome pathway. As to expression, predominantly detected in bud, stem, root, flower, silique, and leaves, and enhanced dramatically in senescence leaf.

It is found in the cell membrane. Functionally, collaborates with REM4.2 to positively regulate the BCTV and BSCTV susceptibility. This is Remorin 4.1 from Arabidopsis thaliana (Mouse-ear cress).